The chain runs to 478 residues: Chromosomal replication initiator protein DnaA (478 aa).

A domain I, interacts with DnaA modulators region spans residues 1–95 (MNKTLNPQEV…DVLEKEITEE (95 aa)). The tract at residues 96-141 (INDLVQSMEEEDFALIDHTKPVIPNFFDQNTRVNFGGGPNNHHPTT) is domain II. The interval 142 to 358 (GVNPRFTFDN…GALLRIFALA (217 aa)) is domain III, AAA+ region. ATP contacts are provided by G186, G188, K189, and T190. Residues 359 to 478 (SFNKEEINMT…YKLTQFILRR (120 aa)) are domain IV, binds dsDNA.

Belongs to the DnaA family. In terms of assembly, oligomerizes as a right-handed, spiral filament on DNA at oriC.

It is found in the cytoplasm. In terms of biological role, plays an essential role in the initiation and regulation of chromosomal replication. ATP-DnaA binds to the origin of replication (oriC) to initiate formation of the DNA replication initiation complex once per cell cycle. Binds the DnaA box (a 9 base pair repeat at the origin) and separates the double-stranded (ds)DNA. Forms a right-handed helical filament on oriC DNA; dsDNA binds to the exterior of the filament while single-stranded (ss)DNA is stabiized in the filament's interior. The ATP-DnaA-oriC complex binds and stabilizes one strand of the AT-rich DNA unwinding element (DUE), permitting loading of DNA polymerase. After initiation quickly degrades to an ADP-DnaA complex that is not apt for DNA replication. Binds acidic phospholipids. The polypeptide is Chromosomal replication initiator protein DnaA (Tropheryma whipplei (strain TW08/27) (Whipple's bacillus)).